The primary structure comprises 71 residues: MELHGSLNMIGYGLAAIGSAIGVGLIFAAYINGVARQPEAQRILQPIALLGFALAEALAILGLVFAFVIGA.

A run of 2 helical transmembrane segments spans residues 9-29 (MIGY…IFAA) and 49-69 (LLGF…AFVI).

This sequence belongs to the ATPase C chain family. F-type ATPases have 2 components, F(1) - the catalytic core - and F(0) - the membrane proton channel. F(1) has five subunits: alpha(3), beta(3), gamma(1), delta(1), epsilon(1). F(0) has three main subunits: a(1), b(2) and c(10-14). The alpha and beta chains form an alternating ring which encloses part of the gamma chain. F(1) is attached to F(0) by a central stalk formed by the gamma and epsilon chains, while a peripheral stalk is formed by the delta and b chains.

The protein localises to the cell membrane. In terms of biological role, f(1)F(0) ATP synthase produces ATP from ADP in the presence of a proton or sodium gradient. F-type ATPases consist of two structural domains, F(1) containing the extramembraneous catalytic core and F(0) containing the membrane proton channel, linked together by a central stalk and a peripheral stalk. During catalysis, ATP synthesis in the catalytic domain of F(1) is coupled via a rotary mechanism of the central stalk subunits to proton translocation. Key component of the F(0) channel; it plays a direct role in translocation across the membrane. A homomeric c-ring of between 10-14 subunits forms the central stalk rotor element with the F(1) delta and epsilon subunits. The protein is ATP synthase subunit c of Micrococcus luteus (strain ATCC 4698 / DSM 20030 / JCM 1464 / CCM 169 / CCUG 5858 / IAM 1056 / NBRC 3333 / NCIMB 9278 / NCTC 2665 / VKM Ac-2230) (Micrococcus lysodeikticus).